An 894-amino-acid chain; its full sequence is Protein translocase subunit SecA (894 aa).

ATP contacts are provided by residues Q87, 105-109 (GEGKT), and D512. The disordered stretch occupies residues 857 to 894 (FNLGDEPEAQQPVTSKKVGRNEPCPCGSGKKYKQCCGK). The Zn(2+) site is built by C880, C882, C891, and C892.

The protein belongs to the SecA family. As to quaternary structure, monomer and homodimer. Part of the essential Sec protein translocation apparatus which comprises SecA, SecYEG and auxiliary proteins SecDF-YajC and YidC. Zn(2+) serves as cofactor.

The protein localises to the cell inner membrane. It localises to the cytoplasm. The catalysed reaction is ATP + H2O + cellular proteinSide 1 = ADP + phosphate + cellular proteinSide 2.. Its function is as follows. Part of the Sec protein translocase complex. Interacts with the SecYEG preprotein conducting channel. Has a central role in coupling the hydrolysis of ATP to the transfer of proteins into and across the cell membrane, serving as an ATP-driven molecular motor driving the stepwise translocation of polypeptide chains across the membrane. This Geotalea uraniireducens (strain Rf4) (Geobacter uraniireducens) protein is Protein translocase subunit SecA.